A 467-amino-acid polypeptide reads, in one-letter code: MDSFAAAETWTDAAGGAGADGRNLSAALAAGAAAEALGTEWLQLLVQAGNLSSSLPSSVPGLPTTSPAPSQPRANLTNQFVQPSWRIALWSLAYGVVVAVAVFGNLIVIWIILAHKRMRTVTNYFLVNLAFSDASMAAFNTLVNFIYALHSEWYFGANYCRFQNFFPITAVFASIYSMTAIAVDRYMAIIDPLKPRLSATATKIVIGSIWILAFLLALPQCLYSKTKVMPGRTLCYVQWPEGPKQHFIYHIIVIILVYCFPLLIMGITYTIVGITLWGGEIPGDTCDKYHEQLKAKRKVVKMMIIVVVTFAICWLPYHIYFILTAIYQQLNRWKYIQQVYLASFWLAMSSTMYNPIIYCCLNKRFRAGFKRAFRWCPFIQVSSYDELELKTTRFHPTRQSSLYTVTRMESMTVVFDPSDADNTRSSRKKRATPGDPNFNGCSRRNSKSASTTSSFISSPYTSMEEYS.

Residues 1-86 (MDSFAAAETW…TNQFVQPSWR (86 aa)) lie on the Extracellular side of the membrane. Asparagine 23, asparagine 50, and asparagine 75 each carry an N-linked (GlcNAc...) asparagine glycan. A helical transmembrane segment spans residues 87-109 (IALWSLAYGVVVAVAVFGNLIVI). Residues 110–119 (WIILAHKRMR) are Cytoplasmic-facing. Residues 120–141 (TVTNYFLVNLAFSDASMAAFNT) traverse the membrane as a helical segment. Residues 142-161 (LVNFIYALHSEWYFGANYCR) are Extracellular-facing. The cysteines at positions 160 and 235 are disulfide-linked. A helical transmembrane segment spans residues 162–183 (FQNFFPITAVFASIYSMTAIAV). Residues 184–203 (DRYMAIIDPLKPRLSATATK) lie on the Cytoplasmic side of the membrane. A helical transmembrane segment spans residues 204–224 (IVIGSIWILAFLLALPQCLYS). At 225 to 247 (KTKVMPGRTLCYVQWPEGPKQHF) the chain is on the extracellular side. The chain crosses the membrane as a helical span at residues 248–272 (IYHIIVIILVYCFPLLIMGITYTIV). The Cytoplasmic portion of the chain corresponds to 273 to 301 (GITLWGGEIPGDTCDKYHEQLKAKRKVVK). Residues 302 to 323 (MMIIVVVTFAICWLPYHIYFIL) form a helical membrane-spanning segment. Residues 324 to 336 (TAIYQQLNRWKYI) are Extracellular-facing. The helical transmembrane segment at 337 to 361 (QQVYLASFWLAMSSTMYNPIIYCCL) threads the bilayer. The Cytoplasmic portion of the chain corresponds to 362 to 467 (NKRFRAGFKR…SPYTSMEEYS (106 aa)). A lipid anchor (S-palmitoyl cysteine) is attached at cysteine 376. Residues 416 to 467 (DPSDADNTRSSRKKRATPGDPNFNGCSRRNSKSASTTSSFISSPYTSMEEYS) are disordered. The span at 447-467 (KSASTTSSFISSPYTSMEEYS) shows a compositional bias: low complexity.

This sequence belongs to the G-protein coupled receptor 1 family.

Its subcellular location is the cell membrane. Its function is as follows. This is a receptor for the tachykinin neuropeptide neuromedin-K (neurokinin B). It is associated with G proteins that activate a phosphatidylinositol-calcium second messenger system. This Oryctolagus cuniculus (Rabbit) protein is Neuromedin-K receptor (TACR3).